A 389-amino-acid chain; its full sequence is Chalcone synthase 9 (389 aa).

C164 is a catalytic residue.

The protein belongs to the thiolase-like superfamily. Chalcone/stilbene synthases family.

The enzyme catalyses (E)-4-coumaroyl-CoA + 3 malonyl-CoA + 3 H(+) = 2',4,4',6'-tetrahydroxychalcone + 3 CO2 + 4 CoA. It functions in the pathway secondary metabolite biosynthesis; flavonoid biosynthesis. Functionally, the primary product of this enzyme is 4,2',4',6'-tetrahydroxychalcone (also termed naringenin-chalcone or chalcone) which can under specific conditions spontaneously isomerize into naringenin. This Medicago sativa (Alfalfa) protein is Chalcone synthase 9 (CHS9).